The chain runs to 383 residues: Large ribosomal subunit protein uL3 (383 aa).

The protein belongs to the universal ribosomal protein uL3 family.

The protein localises to the cytoplasm. The protein is Large ribosomal subunit protein uL3 (RPL3-1) of Encephalitozoon cuniculi (strain GB-M1) (Microsporidian parasite).